The following is a 485-amino-acid chain: Glutamate--tRNA ligase (485 aa).

Residues 11–21 (PSPTGHLHIGG) carry the 'HIGH' region motif. Positions 252 to 256 (KMSKR) match the 'KMSKS' region motif. Residue K255 coordinates ATP.

It belongs to the class-I aminoacyl-tRNA synthetase family. Glutamate--tRNA ligase type 1 subfamily. Monomer.

Its subcellular location is the cytoplasm. It carries out the reaction tRNA(Glu) + L-glutamate + ATP = L-glutamyl-tRNA(Glu) + AMP + diphosphate. Its function is as follows. Catalyzes the attachment of glutamate to tRNA(Glu) in a two-step reaction: glutamate is first activated by ATP to form Glu-AMP and then transferred to the acceptor end of tRNA(Glu). This Halalkalibacterium halodurans (strain ATCC BAA-125 / DSM 18197 / FERM 7344 / JCM 9153 / C-125) (Bacillus halodurans) protein is Glutamate--tRNA ligase.